The following is a 79-amino-acid chain: Sulfur carrier protein TusA (79 aa).

Cysteine 17 functions as the Cysteine persulfide intermediate in the catalytic mechanism.

Belongs to the sulfur carrier protein TusA family.

The protein localises to the cytoplasm. Functionally, sulfur carrier protein which probably makes part of a sulfur-relay system. The polypeptide is Sulfur carrier protein TusA (Actinobacillus pleuropneumoniae serotype 5b (strain L20)).